A 69-amino-acid chain; its full sequence is Small archaeal modifier protein 2 (69 aa).

K55 is covalently cross-linked (Glycyl lysine isopeptide (Lys-Gly) (interchain with G-Cter in SAMP2)). Position 69 is a 1-thioglycine; alternate (G69). Residue G69 is modified to Glycyl adenylate; alternate. G69 is covalently cross-linked (Glycyl lysine isopeptide (Gly-Lys) (interchain with K-? in acceptor proteins); alternate).

The C-terminal glycine is likely acyl-adenylated (-COAMP) by UbaA, and also probably thiocarboxylated (-COSH) to function in sulfur transfer.

Functions as a protein modifier covalently attached to lysine residues of substrate proteins, as well as a sulfur carrier in tRNA thiolation. The protein modification process is termed sampylation and involves the formation of an isopeptide bond between the SAMP2 C-terminal glycine carboxylate and the epsilon-amino group of lysine residues on target proteins. Is able to form polymeric chains with itself likely at Lys-55, similar to ubiquitin and other ubiquitin-like proteins. May serve as a proteolytic signal in the cell to target proteins for degradation by proteasomes. The sequence is that of Small archaeal modifier protein 2 from Pyrococcus furiosus (strain ATCC 43587 / DSM 3638 / JCM 8422 / Vc1).